The following is a 307-amino-acid chain: Protoheme IX farnesyltransferase (307 aa).

The next 8 membrane-spanning stretches (helical) occupy residues 32 to 52 (MGIVNSNTLTVFTGFWLALHF), 65 to 85 (FFTIVGSGLVMAGVCCLNNYI), 108 to 128 (PGFALTFGLVILLLGFVFLLL), 131 to 151 (PMAVLMGFIGAFTYVVLYSLW), 158 to 178 (LNTVVGSISGAVPPLIGWAAI), 186 to 206 (IAWMLFLIMFIWQIPHFLALA), 251 to 271 (LGITFMVIATLLNIGWIVLGF), and 287 to 307 (FVYSLNYLTILFVSMIVVTFF).

Belongs to the UbiA prenyltransferase family. Protoheme IX farnesyltransferase subfamily. As to quaternary structure, interacts with CtaA.

It is found in the cell membrane. The catalysed reaction is heme b + (2E,6E)-farnesyl diphosphate + H2O = Fe(II)-heme o + diphosphate. It participates in porphyrin-containing compound metabolism; heme O biosynthesis; heme O from protoheme: step 1/1. Converts heme B (protoheme IX) to heme O by substitution of the vinyl group on carbon 2 of heme B porphyrin ring with a hydroxyethyl farnesyl side group. The protein is Protoheme IX farnesyltransferase of Bacillus cereus (strain ATCC 10987 / NRS 248).